Consider the following 158-residue polypeptide: MAKVESFTLDHTKVLAPYVRKITVENGPKGDAITNFDLRLVQPNKTAIDTAGLHTIEHMLAGLLRDRMDGVIDCSPFGCRTGFHLITWGEHDTVEVAKALKSSLEFIAGPAKWEDVQGTTIDSCGNYKDHSLFSAKEWAKLILSQGISSDPFVRKVVE.

Fe cation contacts are provided by His54, His58, and Cys124.

This sequence belongs to the LuxS family. As to quaternary structure, homodimer. The cofactor is Fe cation.

It carries out the reaction S-(5-deoxy-D-ribos-5-yl)-L-homocysteine = (S)-4,5-dihydroxypentane-2,3-dione + L-homocysteine. Functionally, involved in the synthesis of autoinducer 2 (AI-2) which is secreted by bacteria and is used to communicate both the cell density and the metabolic potential of the environment. The regulation of gene expression in response to changes in cell density is called quorum sensing. Catalyzes the transformation of S-ribosylhomocysteine (RHC) to homocysteine (HC) and 4,5-dihydroxy-2,3-pentadione (DPD). The sequence is that of S-ribosylhomocysteine lyase from Lactiplantibacillus plantarum (strain ATCC BAA-793 / NCIMB 8826 / WCFS1) (Lactobacillus plantarum).